The sequence spans 445 residues: Ribosomal protein uS12 methylthiotransferase RimO (445 aa).

Positions 10-120 (PKVGFVSLGC…VVNAVHEVVP (111 aa)) constitute an MTTase N-terminal domain. Residues Cys19, Cys55, Cys84, Cys153, Cys157, and Cys160 each coordinate [4Fe-4S] cluster. Residues 139-378 (LTPRHYAYLK…AHQQEISSAR (240 aa)) enclose the Radical SAM core domain. The TRAM domain maps to 380 to 445 (QQRIGKEIEV…DEYDLWAETL (66 aa)).

This sequence belongs to the methylthiotransferase family. RimO subfamily. Requires [4Fe-4S] cluster as cofactor.

The protein localises to the cytoplasm. The catalysed reaction is L-aspartate(89)-[ribosomal protein uS12]-hydrogen + (sulfur carrier)-SH + AH2 + 2 S-adenosyl-L-methionine = 3-methylsulfanyl-L-aspartate(89)-[ribosomal protein uS12]-hydrogen + (sulfur carrier)-H + 5'-deoxyadenosine + L-methionine + A + S-adenosyl-L-homocysteine + 2 H(+). In terms of biological role, catalyzes the methylthiolation of an aspartic acid residue of ribosomal protein uS12. The chain is Ribosomal protein uS12 methylthiotransferase RimO from Pseudomonas fluorescens (strain ATCC BAA-477 / NRRL B-23932 / Pf-5).